The primary structure comprises 258 residues: Synapse differentiation-inducing gene protein 1 (258 aa).

The Cytoplasmic portion of the chain corresponds to 1–181 (MDGIIEQKSM…NFLMMPPRDH (181 aa)). Serine 137 carries the post-translational modification Phosphoserine. Residues 182 to 202 (LGLSVFSMLCCFWPLGIAAFY) traverse the membrane as a helical segment. Residues 203–228 (LSHETNKAVAKGDLHQASTSSRRALF) lie on the Extracellular side of the membrane. An intramembrane region (helical) is located at residues 229–249 (LAVLSITIGTGVYVGVAVALI). The Extracellular portion of the chain corresponds to 250–258 (AYLSKNNHL).

This sequence belongs to the CD225/Dispanin family. In terms of assembly, homodimer. Interacts with GRIA1 and GRIA2.

Its subcellular location is the cell membrane. It localises to the early endosome membrane. The protein resides in the postsynaptic density membrane. It is found in the synapse. The protein localises to the cell projection. Its subcellular location is the dendrite. It localises to the dendritic spine. In terms of biological role, may regulate AMPA receptor content at nascent synapses, and have a role in postsynaptic development and maturation. This chain is Synapse differentiation-inducing gene protein 1 (SYNDIG1), found in Macaca fascicularis (Crab-eating macaque).